The primary structure comprises 807 residues: MSKQDSLWFKSLRWLQKKLVHTIVVPQEPFKDLNLDPEKPLVYVMKTESLSDIAALSEITGELGLPSPYEPLEVEGRSTPRVVCLEGAKPLMGKRESNEFFLSSFMDLLKAHKESPDLDIQLVPVSLYWGRTPGKEDDTMKAAVLERENPTWLRKCLMILFLGRHNFVQFSNSVSIRYMADEHGTDKRIAHKLARVARVHFSRQRKVMTGPVLPKRQALFHALINSESLKRAIQEEATSKKISEVEARAKAMEYLDEIAADYSDSLVRIAERFLTWLWNKLYKGINIKGAEQIRQLHHDGHEIIYVPCHRSHMDYLLLSYILYYQGMVPPHIAAGINLNFWPAGPMFRRGGAFFIRRSFRGNKLYTAVFREYLDQLFTKGYSVEYFTEGGRSRTGRLLAPKTGMIAMTLNSVLRGMERPVTLVPVYLGYDHVMEVATYHKELSGKKKKKESVWQVFGALRKLGNFGQGYVNFGKPITLHSFLNEQVPDWREEIASDPEQKPTWLTPVVNTLANQVMTNINDAAAVSSVTLTSLVLLASEQNALERTQLEKQLDLYLKLLKDLPYTSYTSVVEGDGKQLVTQGLELKKLQLDSDPLGDIVSIDESISIAMTYYRNNIIHLMIIPSLVASCLTQHERITRDEIKAIIADFYPLLEAELFMGVEDTDKLVEQILDLFIEQQLIREDTGFSVVETSINQLLLLAGTVSETLQRYAIIFNLLADFPEMERSDLEAESHKLAKRLGALHGITAPEFYDKNLYRTLSVKLKDLGYLKDNGNKADVERVRASANGLLRSSVRQTIVDSVAAERSA.

The HXXXXD motif signature appears at 308–313; that stretch reads CHRSHM.

This sequence belongs to the GPAT/DAPAT family.

Its subcellular location is the cell inner membrane. The catalysed reaction is sn-glycerol 3-phosphate + an acyl-CoA = a 1-acyl-sn-glycero-3-phosphate + CoA. It participates in phospholipid metabolism; CDP-diacylglycerol biosynthesis; CDP-diacylglycerol from sn-glycerol 3-phosphate: step 1/3. The protein is Glycerol-3-phosphate acyltransferase of Shewanella woodyi (strain ATCC 51908 / MS32).